The sequence spans 136 residues: Large ribosomal subunit protein bL17 (136 aa).

This sequence belongs to the bacterial ribosomal protein bL17 family. Part of the 50S ribosomal subunit. Contacts protein L32.

The protein is Large ribosomal subunit protein bL17 of Rickettsia prowazekii (strain Madrid E).